The following is a 264-amino-acid chain: L-aspartate dehydrogenase (264 aa).

NAD(+) contacts are provided by Ala120 and Asn186. Residue His216 is part of the active site.

This sequence belongs to the L-aspartate dehydrogenase family.

The catalysed reaction is L-aspartate + NADP(+) + H2O = oxaloacetate + NH4(+) + NADPH + H(+). It carries out the reaction L-aspartate + NAD(+) + H2O = oxaloacetate + NH4(+) + NADH + H(+). It participates in cofactor biosynthesis; NAD(+) biosynthesis; iminoaspartate from L-aspartate (dehydrogenase route): step 1/1. Functionally, specifically catalyzes the NAD or NADP-dependent dehydrogenation of L-aspartate to iminoaspartate. This is L-aspartate dehydrogenase from Serratia proteamaculans (strain 568).